The following is a 339-amino-acid chain: RNA 3'-terminal phosphate cyclase (339 aa).

Residues glutamine 103 and 283–287 (HLADQ) contribute to the ATP site. The active-site Tele-AMP-histidine intermediate is histidine 308.

Belongs to the RNA 3'-terminal cyclase family. Type 1 subfamily.

It is found in the cytoplasm. The catalysed reaction is a 3'-end 3'-phospho-ribonucleotide-RNA + ATP = a 3'-end 2',3'-cyclophospho-ribonucleotide-RNA + AMP + diphosphate. Catalyzes the conversion of 3'-phosphate to a 2',3'-cyclic phosphodiester at the end of RNA. The mechanism of action of the enzyme occurs in 3 steps: (A) adenylation of the enzyme by ATP; (B) transfer of adenylate to an RNA-N3'P to produce RNA-N3'PP5'A; (C) and attack of the adjacent 2'-hydroxyl on the 3'-phosphorus in the diester linkage to produce the cyclic end product. The biological role of this enzyme is unknown but it is likely to function in some aspects of cellular RNA processing. In Salmonella typhimurium (strain LT2 / SGSC1412 / ATCC 700720), this protein is RNA 3'-terminal phosphate cyclase.